A 359-amino-acid chain; its full sequence is Decorin (359 aa).

Positions 1 to 16 (MKATIILLLLAQVSWA) are cleaved as a signal peptide. Positions 17-30 (GPFQQRGLFDFMLE) are excised as a propeptide. An O-linked (Xyl...) (glycosaminoglycan) serine glycan is attached at serine 34. 2 disulfide bridges follow: cysteine 54–cysteine 60 and cysteine 58–cysteine 67. LRR repeat units follow at residues 73–93 (DKVP…NNKI), 94–117 (TEIK…NNKI), 118–141 (SKVS…KNQL), 142–162 (KELP…ENEI), 163–186 (TKVR…TNPL), 187–212 (KSSG…DTNI), 213–233 (TSIP…GNKI), 234–257 (SRVD…FNSI), 258–281 (SAVD…NNKL), 282–304 (TRVP…NNNI), 305–334 (SVVG…SNPV), and 335–359 (QYWE…GNYK). The N-linked (GlcNAc...) asparagine glycan is linked to asparagine 211. 2 N-linked (GlcNAc...) asparagine glycosylation sites follow: asparagine 262 and asparagine 303. A disulfide bridge links cysteine 313 with cysteine 346.

Belongs to the small leucine-rich proteoglycan (SLRP) family. SLRP class I subfamily. As to quaternary structure, binds to type I and type II collagen, fibronectin and TGF-beta. Forms a ternary complex with MFAP2 and ELN. Interacts with DPT. In terms of processing, the attached glycosaminoglycan chain can be either chondroitin sulfate or dermatan sulfate depending upon the tissue of origin. As to expression, detected in placenta (at protein level). Detected in cerebrospinal fluid, fibroblasts and urine (at protein level).

It localises to the secreted. The protein localises to the extracellular space. It is found in the extracellular matrix. In terms of biological role, may affect the rate of fibrils formation. This is Decorin (DCN) from Homo sapiens (Human).